The primary structure comprises 407 residues: Inhibin beta B chain (407 aa).

The signal sequence occupies residues 1-28 (MDGLPGRALGAACLLLLAAGWLGPEAWG). A disordered region spans residues 27–60 (WGSPTPPPSPAAPPPPPPPGALGGSQDTCTSCGG). The propeptide occupies 29 to 292 (SPTPPPSPAA…VDSRHRIRKR (264 aa)). Residues 30-46 (PTPPPSPAAPPPPPPPG) show a composition bias toward pro residues. Residue Asn-93 is glycosylated (N-linked (GlcNAc...) asparagine). 4 cysteine pairs are disulfide-bonded: Cys-296–Cys-304, Cys-303–Cys-372, Cys-332–Cys-404, and Cys-336–Cys-406.

This sequence belongs to the TGF-beta family. Dimeric, linked by one or more disulfide bonds. Inhibin B is a dimer of alpha and beta-B. Activin B is a homodimer of beta-B. Activin AB is a dimer of beta-A and beta-B. Interacts with FST and FSTL3.

It is found in the secreted. Its function is as follows. Inhibins and activins inhibit and activate, respectively, the secretion of follitropin by the pituitary gland. Inhibins/activins are involved in regulating a number of diverse functions such as hypothalamic and pituitary hormone secretion, gonadal hormone secretion, germ cell development and maturation, erythroid differentiation, insulin secretion, nerve cell survival, embryonic axial development or bone growth, depending on their subunit composition. Inhibins appear to oppose the functions of activins. Activin B is a dimer of alpha and beta-B that plays a role in several essential biological processes including embryonic development, stem cell maintenance and differentiation, haematopoiesis, cell proliferation and wound healing. Signals through type I receptor ACVR1C, abundantly expressed in pancreatic beta cells, and type II receptors like ACVR2A. Upon ligand binding, these receptors phosphorylate intracellular signaling mediators SMAD2 and SMAD3, which form a complex with SMAD4, translocate to the nucleus, and regulate gene expression. Plays a crucial role in the induction of hepcidin by inflammation through activation of ACVR1C and subsequent phosphorylation of SMAD1/5/8. Regulates adipocyte lipid metabolism by decreasing non-esterified fatty acids and glycerol release and increases intracellular triglyceride content. Stimulates wound healing by promoting cell migration and hair follicle regeneration through the JNK and ERK signaling pathways downstream of RHOA. Functionally, inhibin B is a dimer of alpha and beta-B that plays a crucial role in the regulation of the reproductive system by inhibiting the secretion of follicle-stimulating hormone (FSH) from the anterior pituitary gland. Thereby, maintains reproductive homeostasis in both males and females. Acts as a more potent suppressor of FSH release than inhibin A. Functions as competitive receptor antagonist binding activin type II receptors with high affinity in the presence of the TGF-beta type III coreceptor/TGFBR3L. In Sus scrofa (Pig), this protein is Inhibin beta B chain (INHBB).